We begin with the raw amino-acid sequence, 260 residues long: Adenosylcobinamide-GDP ribazoletransferase (260 aa).

Helical transmembrane passes span 31–51 (IIFF…LVNI), 55–75 (IFSS…VRGI), 111–131 (VIGV…FAFV), 140–160 (FLIF…LMYY), 177–197 (ISSW…VYFT), 202–222 (FIFL…LKKF), and 234–254 (HLGA…LLGE).

This sequence belongs to the CobS family. Requires Mg(2+) as cofactor.

The protein resides in the cell inner membrane. It carries out the reaction alpha-ribazole + adenosylcob(III)inamide-GDP = adenosylcob(III)alamin + GMP + H(+). It catalyses the reaction alpha-ribazole 5'-phosphate + adenosylcob(III)inamide-GDP = adenosylcob(III)alamin 5'-phosphate + GMP + H(+). It participates in cofactor biosynthesis; adenosylcobalamin biosynthesis; adenosylcobalamin from cob(II)yrinate a,c-diamide: step 7/7. In terms of biological role, joins adenosylcobinamide-GDP and alpha-ribazole to generate adenosylcobalamin (Ado-cobalamin). Also synthesizes adenosylcobalamin 5'-phosphate from adenosylcobinamide-GDP and alpha-ribazole 5'-phosphate. The sequence is that of Adenosylcobinamide-GDP ribazoletransferase from Thermodesulfovibrio yellowstonii (strain ATCC 51303 / DSM 11347 / YP87).